A 510-amino-acid polypeptide reads, in one-letter code: Adenosine deaminase 2 (510 aa).

A signal peptide spans 1-24; it reads MSGWPVLPALLLAVAMSSFHSATS. A dimerization region spans residues 25 to 95; sequence RDEERNRLLM…GLMEKSAVFN (71 aa). Zn(2+) contacts are provided by His-107 and His-109. Asp-110 provides a ligand contact to substrate. Residue Asn-122 is glycosylated (N-linked (GlcNAc...) asparagine). The tract at residues 122–182 is PRB domain; sequence NATYRPYCYF…TEFDNSLLRT (61 aa). Cys-132 and Cys-156 are disulfide-bonded. The N-linked (GlcNAc...) asparagine glycan is linked to Asn-171. Substrate-binding positions include 201 to 208, His-290, and Gly-323; that span reads WKKFKTIF. His-353 lines the Zn(2+) pocket. Glu-356 functions as the Proton donor in the catalytic mechanism. An N-linked (GlcNAc...) asparagine glycan is attached at Asn-375. The Proton acceptor role is filled by His-381. Asp-438 serves as a coordination point for Zn(2+). Asp-439 contacts substrate.

It belongs to the metallo-dependent hydrolases superfamily. Adenosine and AMP deaminases family. ADGF subfamily. In terms of assembly, homodimer. Interacts with adenosine receptors. Binds heparin. It depends on Zn(2+) as a cofactor.

It localises to the secreted. The enzyme catalyses adenosine + H2O + H(+) = inosine + NH4(+). In terms of biological role, adenosine deaminase that may contribute to the degradation of extracellular adenosine, a signaling molecule that controls a variety of cellular responses. Requires elevated adenosine levels for optimal enzyme activity. Binds to cell surfaces via proteoglycans and may play a role in the regulation of cell proliferation and differentiation, independently of its enzyme activity. In Sus scrofa (Pig), this protein is Adenosine deaminase 2.